A 153-amino-acid chain; its full sequence is Selenoprotein F (153 aa).

A signal peptide spans 1–19; sequence MAGEVYLLWLLPLLQGLAS. Position 84 (Sec84) is a non-standard amino acid, selenocysteine.

The protein belongs to the selenoprotein M/F family. In terms of tissue distribution, higher levels in polster, prechordal plate, axis, otic vesicle and somites. Lower levels in fin buds.

It localises to the endoplasmic reticulum lumen. Its function is as follows. May be involved in redox reactions associated with the formation of disulfide bonds. May contribute to the quality control of protein folding in the endoplasmic reticulum. This is Selenoprotein F from Danio rerio (Zebrafish).